The following is a 65-amino-acid chain: MSNQNIPQLSEYQTSVSQVAVTPPPKPETPQIFEYQTSDSIVNNPRPFYNSDLEFDDIDMYLLPN.

The span at 1–20 shows a compositional bias: polar residues; it reads MSNQNIPQLSEYQTSVSQVA. A disordered region spans residues 1–31; it reads MSNQNIPQLSEYQTSVSQVAVTPPPKPETPQ.

This is 7 kDa A-type inclusion protein from Vaccinia virus (strain Copenhagen) (VACV).